Consider the following 238-residue polypeptide: Triosephosphate isomerase (238 aa).

Residue 7–9 (NFK) participates in substrate binding. His-91 (electrophile) is an active-site residue. Glu-158 (proton acceptor) is an active-site residue. Substrate contacts are provided by Gly-164 and Ser-200.

The protein belongs to the triosephosphate isomerase family. As to quaternary structure, homodimer.

It is found in the cytoplasm. The enzyme catalyses D-glyceraldehyde 3-phosphate = dihydroxyacetone phosphate. It participates in carbohydrate biosynthesis; gluconeogenesis. It functions in the pathway carbohydrate degradation; glycolysis; D-glyceraldehyde 3-phosphate from glycerone phosphate: step 1/1. Involved in the gluconeogenesis. Catalyzes stereospecifically the conversion of dihydroxyacetone phosphate (DHAP) to D-glyceraldehyde-3-phosphate (G3P). The protein is Triosephosphate isomerase of Ureaplasma parvum serovar 3 (strain ATCC 27815 / 27 / NCTC 11736).